A 570-amino-acid chain; its full sequence is Sulfite reductase [NADPH] hemoprotein beta-component (570 aa).

[4Fe-4S] cluster-binding residues include Cys434, Cys440, Cys479, and Cys483. Siroheme is bound at residue Cys483.

This sequence belongs to the nitrite and sulfite reductase 4Fe-4S domain family. As to quaternary structure, alpha(8)-beta(8). The alpha component is a flavoprotein, the beta component is a hemoprotein. Requires siroheme as cofactor. It depends on [4Fe-4S] cluster as a cofactor.

The catalysed reaction is hydrogen sulfide + 3 NADP(+) + 3 H2O = sulfite + 3 NADPH + 4 H(+). It participates in sulfur metabolism; hydrogen sulfide biosynthesis; hydrogen sulfide from sulfite (NADPH route): step 1/1. In terms of biological role, component of the sulfite reductase complex that catalyzes the 6-electron reduction of sulfite to sulfide. This is one of several activities required for the biosynthesis of L-cysteine from sulfate. This chain is Sulfite reductase [NADPH] hemoprotein beta-component, found in Salmonella paratyphi B (strain ATCC BAA-1250 / SPB7).